A 348-amino-acid polypeptide reads, in one-letter code: 2-methyl-6-phytyl-1,4-hydroquinone methyltransferase 2, chloroplastic (348 aa).

Residues Met1–Gly48 form a disordered region. The transit peptide at Met1 to Arg59 directs the protein to the chloroplast. Over Cys60–Arg317 the chain is Chloroplast intermembrane. Residues Val125–Phe134 form an SAM motif I region. An SAM motif II region spans residues Val170–Pro183. An SAM motif III region spans residues Arg211–Pro224. Residues Phe318–Lys338 traverse the membrane as a helical segment. Residues Asp339–Ile348 lie on the Stromal side of the membrane.

The protein belongs to the class I-like SAM-binding methyltransferase superfamily. MPBQ/MBSQ MT family.

Its subcellular location is the plastid. The protein resides in the chloroplast inner membrane. The catalysed reaction is 2-methyl-6-phytyl-1,4-benzene-1,4-diol + S-adenosyl-L-methionine = 2,3-dimethyl-6-phytylbenzene-1,4-diol + S-adenosyl-L-homocysteine + H(+). It catalyses the reaction 2-methyl-6-(all-trans-nonaprenyl)benzene-1,4-diol + S-adenosyl-L-methionine = plastoquinol-9 + S-adenosyl-L-homocysteine + H(+). The enzyme catalyses 6-geranylgeranyl-2-methylbenzene-1,4-diol + S-adenosyl-L-methionine = 6-geranylgeranyl-2,3-dimethylbenzene-1,4-diol + S-adenosyl-L-homocysteine + H(+). It functions in the pathway cofactor biosynthesis; tocopherol biosynthesis. In terms of biological role, involved in a key methylation step in both tocopherols (vitamin E) and plastoquinone synthesis. Catalyzes the conversion of 2-methyl-6-phytyl-1,4-hydroquinone (MPBQ) to 2,3-dimethyl-6-phytyl-1,4-hydroquinone (DMPQ, a substrate for tocopherol cyclase), and 2-methyl-6-solanyl-1,4-benzoquinone (MSBQ) to plastoquinone. In Oryza sativa subsp. japonica (Rice), this protein is 2-methyl-6-phytyl-1,4-hydroquinone methyltransferase 2, chloroplastic.